Here is a 183-residue protein sequence, read N- to C-terminus: Auxin-responsive protein IAA20 (183 aa).

Disordered regions lie at residues 1–23 (MELE…TATA) and 42–77 (GFEE…NKRR). Residues 3 to 7 (LELGL) carry the EAR-like (transcriptional repression) motif. Residues 98-183 (GGYVKVKMEG…KSVKRLKILV (86 aa)) form the PB1 domain.

It belongs to the Aux/IAA family. In terms of assembly, homodimers and heterodimers. In terms of tissue distribution, expressed at very low levels in etiolated seedlings and flowers.

It localises to the nucleus. Its function is as follows. Aux/IAA proteins are short-lived transcriptional factors that function as repressors of early auxin response genes at low auxin concentrations. This is Auxin-responsive protein IAA20 (IAA20) from Oryza sativa subsp. japonica (Rice).